Here is a 370-residue protein sequence, read N- to C-terminus: tRNA-specific 2-thiouridylase MnmA (370 aa).

ATP contacts are provided by residues 24–31 (AMSGGVDS) and Leu-50. Cys-118 serves as the catalytic Nucleophile. A disulfide bridge connects residues Cys-118 and Cys-214. Residue Gly-142 participates in ATP binding. Positions 164-166 (KDQ) are interaction with tRNA. Cys-214 (cysteine persulfide intermediate) is an active-site residue.

It belongs to the MnmA/TRMU family.

The protein localises to the cytoplasm. It catalyses the reaction S-sulfanyl-L-cysteinyl-[protein] + uridine(34) in tRNA + AH2 + ATP = 2-thiouridine(34) in tRNA + L-cysteinyl-[protein] + A + AMP + diphosphate + H(+). Its function is as follows. Catalyzes the 2-thiolation of uridine at the wobble position (U34) of tRNA, leading to the formation of s(2)U34. The chain is tRNA-specific 2-thiouridylase MnmA from Ehrlichia ruminantium (strain Gardel).